Reading from the N-terminus, the 284-residue chain is Tropomyosin Lep s 1.0101 (284 aa).

A coiled-coil region spans residues 1–273 (MEAIKKKMQA…KDRYRALADE (273 aa)). Basic and acidic residues predominate over residues 155–171 (AEDADGKSDEVSRKMAQ). The segment at 155 to 187 (AEDADGKSDEVSRKMAQVEDDLEVAEDRVKSGD) is disordered.

Belongs to the tropomyosin family. In terms of assembly, homodimer.

Its function is as follows. Tropomyosin, in association with the troponin complex, plays a central role in the calcium dependent regulation of muscle contraction. This Lepisma saccharinum (Silverfish) protein is Tropomyosin Lep s 1.0101.